The chain runs to 295 residues: uncharacterized protein (295 aa).

The 99-residue stretch at 8–106 (QKTINWIESH…HMPPGAYRTF (99 aa)) folds into the HTH araC/xylS-type domain. A DNA-binding region (H-T-H motif) is located at residues 25–46 (EDIVNVSSFSKFHFHRIFQKEV).

Its function is as follows. Probable transcriptional regulator. This is an uncharacterized protein from Bacillus subtilis (strain 168).